A 275-amino-acid polypeptide reads, in one-letter code: MPLMKFKPTSPGRRSAVRVVTPDLHKGAPHAALVESQSRSGGRNHHGRITVRHVGGGAKQHYRIIDFKRNKLGIPARVERIEYDPNRTAHIALLCYVDGERRYIIAPKGLKAGDQVIAGSDAPIKAGNTLPLRNIPVGTTIHCIELKPGKGAQIARAAGAAVQLVAREGIYATLRLRSGEMRKVPVECCATIGEVGNDEHSLEKLGKAGAKRWRGVRPTVRGAAMNPVDHPHGGGEAKAGQGNPHPVTPWGVPTKGYKTRHNKRTQQFIVRDRRG.

2 disordered regions span residues 28-49 (APHA…HGRI) and 224-246 (AMNP…NPHP).

This sequence belongs to the universal ribosomal protein uL2 family. Part of the 50S ribosomal subunit. Forms a bridge to the 30S subunit in the 70S ribosome.

Its function is as follows. One of the primary rRNA binding proteins. Required for association of the 30S and 50S subunits to form the 70S ribosome, for tRNA binding and peptide bond formation. It has been suggested to have peptidyltransferase activity; this is somewhat controversial. Makes several contacts with the 16S rRNA in the 70S ribosome. This is Large ribosomal subunit protein uL2 from Stenotrophomonas maltophilia (strain R551-3).